The primary structure comprises 22 residues: NADH-ubiquinone oxidoreductase 16 kDa subunit (22 aa).

Complex I is composed of about 45 different subunits.

It is found in the mitochondrion inner membrane. It catalyses the reaction a ubiquinone + NADH + 5 H(+)(in) = a ubiquinol + NAD(+) + 4 H(+)(out). Its function is as follows. Transfer of electrons from NADH to the respiratory chain. The immediate electron acceptor for the enzyme is believed to be ubiquinone. The sequence is that of NADH-ubiquinone oxidoreductase 16 kDa subunit from Solanum tuberosum (Potato).